The sequence spans 479 residues: Caspase-8 (479 aa).

The propeptide occupies 1-216 (MDFSRNLYDI…TISDSPREQD (216 aa)). 2 consecutive DED domains span residues 2-80 (DFSR…TYLN) and 100-177 (AYRV…IIND). Ser188 and Ser211 each carry phosphoserine. Lys224 is subject to N6-acetyllysine. Residue His317 is part of the active site. Tyr334 is modified (phosphotyrosine). Residue Cys360 is part of the active site. Residues 375–384 (SEEQPYLEMD) constitute a propeptide that is removed on maturation. A Phosphotyrosine; by SRC modification is found at Tyr380. Ser387 bears the Phosphoserine; by CDK1 mark. Arg413 is subject to (Microbial infection) ADP-riboxanated arginine.

The protein belongs to the peptidase C14A family. In terms of assembly, heterotetramer that consists of two anti-parallel arranged heterodimers, each one formed by a 18 kDa (p18) and a 10 kDa (p10) subunit. Component of the death-induced signaling complex (DISC) composed of cell surface receptor FAS/CD95 or TNFRSF1A, adapter protein FADD and the CASP8 protease; recruitment of CASP8 to the complex is required for processing of CASP8 into the p18 and p10 subunits. Component of the AIM2 PANoptosome complex, a multiprotein complex that drives inflammatory cell death (PANoptosis). Interacts with CFLAR and PEA15. Interacts with TNFAIP8L2. Interacts with CASP8AP2. Interacts with RFFL and RNF34; negatively regulate CASP8 through proteasomal degradation. Interacts with NOL3; decreases CASP8 activity in a mitochondria localization- and phosphorylation-dependent manner and this interaction is dissociated by calcium. Interacts with UBR2ca. Interacts with RIPK1. Interacts with stimulated TNFRSF10B; this interaction is followed by CASP8 proteolytic cleavage and activation. Interacts (phosphorylated on Tyr-380) with PIK3R1. Interacts at the endoplasmic reticulum with a complex containing BCAP31, BAP29, BCL2 and/or BCL2L1. As to quaternary structure, (Microbial infection) Interacts with human cytomegalovirus/HHV-5 protein vICA/UL36; this interaction inhibits CASP8 activation. In terms of assembly, (Microbial infection) Interacts with NleF from pathogenic E.coli. (Microbial infection) Interacts with molluscum contagiosum virus protein MC160. As to quaternary structure, (Microbial infection) Interacts (via RIP homotypic interaction motif) with herpes simplex virus 1/HHV-1 protein RIR1/ICP6 (via RIP homotypic interaction motif); this interaction prevents necroptosis activation. In terms of assembly, (Microbial infection) Interacts (via RIP homotypic interaction motif) with herpes simplex virus 2/HHV-2 protein RIR1/ICP10 (via RIP homotypic interaction motif); this interaction prevents necroptosis activation. Post-translationally, generation of the p10 and p18 subunits requires association with the death-inducing signaling complex (DISC), whereas additional processing is likely due to the autocatalytic activity of the activated protease. GZMB and CASP10 can be involved in these processing events. In terms of processing, phosphorylation on Ser-387 during mitosis by CDK1 inhibits activation by proteolysis and prevents apoptosis. Phosphorylation on Tyr-380 by SRC is mediated by interaction with the SRC SH2 domain and does not affect dimerization or recruitment to the death-inducing signaling complex (DISC) but negatively regulates DISC-mediated processing and activation of CASP8, down-regulating its proapoptotic function. Phosphorylation on Tyr-380 also enhances localization to lamellipodia in migrating cells. (Microbial infection) ADP-riboxanation by C.violaceum CopC blocks CASP8 processing, preventing CASP8 activation and ability to mediate extrinsic apoptosis. Post-translationally, (Microbial infection) Proteolytically cleaved by the cowpox virus CRMA death inhibitory protein. In terms of tissue distribution, isoform 1, isoform 5 and isoform 7 are expressed in a wide variety of tissues. Highest expression in peripheral blood leukocytes, spleen, thymus and liver. Barely detectable in brain, testis and skeletal muscle.

Its subcellular location is the cytoplasm. The protein resides in the nucleus. It localises to the cell projection. It is found in the lamellipodium. It catalyses the reaction Strict requirement for Asp at position P1 and has a preferred cleavage sequence of (Leu/Asp/Val)-Glu-Thr-Asp-|-(Gly/Ser/Ala).. CASP8 activity is restricted by RIPK1. Inhibited by the effector protein NleF that is produced by pathogenic E.coli; this inhibits apoptosis. Its function is as follows. Thiol protease that plays a key role in programmed cell death by acting as a molecular switch for apoptosis, necroptosis and pyroptosis, and is required to prevent tissue damage during embryonic development and adulthood. Initiator protease that induces extrinsic apoptosis by mediating cleavage and activation of effector caspases responsible for FAS/CD95-mediated and TNFRSF1A-induced cell death. Cleaves and activates effector caspases CASP3, CASP4, CASP6, CASP7, CASP9 and CASP10. Binding to the adapter molecule FADD recruits it to either receptor FAS/TNFRSF6 or TNFRSF1A. The resulting aggregate called the death-inducing signaling complex (DISC) performs CASP8 proteolytic activation. The active dimeric enzyme is then liberated from the DISC and free to activate downstream apoptotic proteases. Proteolytic fragments of the N-terminal propeptide (termed CAP3, CAP5 and CAP6) are likely retained in the DISC. In addition to extrinsic apoptosis, also acts as a negative regulator of necroptosis: acts by cleaving RIPK1 at 'Asp-324', which is crucial to inhibit RIPK1 kinase activity, limiting TNF-induced apoptosis, necroptosis and inflammatory response. Also able to initiate pyroptosis by mediating cleavage and activation of gasdermin-C and -D (GSDMC and GSDMD, respectively): gasdermin cleavage promotes release of the N-terminal moiety that binds to membranes and forms pores, triggering pyroptosis. Initiates pyroptosis following inactivation of MAP3K7/TAK1. Also acts as a regulator of innate immunity by mediating cleavage and inactivation of N4BP1 downstream of TLR3 or TLR4, thereby promoting cytokine production. May participate in the Granzyme B (GZMB) cell death pathways. Cleaves PARP1 and PARP2. Independent of its protease activity, promotes cell migration following phosphorylation at Tyr-380. Functionally, lacks the catalytic site and may interfere with the pro-apoptotic activity of the complex. In terms of biological role, lacks the catalytic site and may interfere with the pro-apoptotic activity of the complex. Acts as an inhibitor of the caspase cascade. In Homo sapiens (Human), this protein is Caspase-8.